We begin with the raw amino-acid sequence, 404 residues long: Ubiquitin-like modifier-activating enzyme 5 (404 aa).

ATP is bound by residues Gly-83, Asp-104, Lys-127, Asn-150, and Asn-184. Residues Cys-226 and Cys-229 each contribute to the Zn(2+) site. Catalysis depends on Cys-250, which acts as the Glycyl thioester intermediate. Cys-303 and Cys-308 together coordinate Zn(2+). Residues 372–404 (APEKSSETSEETVSAATADETSLEDLMAQMKSM) are disordered. Residues 382–391 (ETVSAATADE) are compositionally biased toward low complexity.

The protein belongs to the ubiquitin-activating E1 family. UBA5 subfamily. Interacts (via C-terminus) with Ufc1. Interacts with Ufm1.

Its subcellular location is the cytoplasm. The protein localises to the nucleus. It is found in the golgi apparatus. In terms of biological role, E1-like enzyme which activates UFM1. This is Ubiquitin-like modifier-activating enzyme 5 from Drosophila melanogaster (Fruit fly).